A 123-amino-acid chain; its full sequence is DNA-directed RNA polymerase I subunit RPA12 (123 aa).

C17, C20, C35, C38, C84, and C87 together coordinate Zn(2+). The C4-type zinc-finger motif lies at 17–38 (CPDCGSVLPLPGVQDAVACTRC). A TFIIS-type zinc finger spans residues 80-120 (VDRRCSRCGHEGMAYHTRQMRSADEGQTVFYTCTNCKFQEK). The Hairpin motif lies at 103–104 (DE). Positions 112 and 115 each coordinate Zn(2+).

This sequence belongs to the archaeal RpoM/eukaryotic RPA12/RPB9/RPC11 RNA polymerase family. Component of the RNA polymerase I (Pol I) complex consisting of at least 13 subunits.

The protein resides in the nucleus. It is found in the nucleolus. In terms of biological role, core component of RNA polymerase I (Pol I), a DNA-dependent RNA polymerase which synthesizes ribosomal RNA precursors using the four ribonucleoside triphosphates as substrates. Can mediate Pol I proofreading of the nascent RNA transcript. Anchors into the Pol I active site to monitor transcription fidelity and cleave mis-incorporated 5'-ribonucleotides. This is DNA-directed RNA polymerase I subunit RPA12 from Bos taurus (Bovine).